The sequence spans 521 residues: Adenosylhomocysteinase-like 1 (521 aa).

A disordered region spans residues 1 to 92 (MNNLADTVVV…EKVQKNSKGS (92 aa)). The span at 54–73 (RSLSASSTDSFSSASYTGSS) shows a compositional bias: low complexity. Positions 220 and 245 each coordinate substrate. Residue 246–248 (SVT) participates in NAD(+) binding. Substrate contacts are provided by Lys275 and Asp279. NAD(+) contacts are provided by residues 311–316 (GDVGKG), Glu332, 388–390 (MGH), Asn435, Lys515, 515–519 (KPNYY), and Tyr519.

This sequence belongs to the adenosylhomocysteinase family. Interacts with Ahcy; the interaction may negatively regulate Ahcy catalytic activity. Requires NAD(+) as cofactor.

Might play a role in the regulation of methionine metabolism possibly by binding and inactivating Ahcy. The protein is Adenosylhomocysteinase-like 1 of Drosophila melanogaster (Fruit fly).